Reading from the N-terminus, the 195-residue chain is Porimin (195 aa).

Residues 1–23 form the signal peptide; it reads MALCARAALLLGVLQVLALLGAA. Topologically, residues 24–152 are extracellular; that stretch reads QDPTDAQGSA…PTKGKGSKFD (129 aa). 6 N-linked (GlcNAc...) asparagine glycosylation sites follow: N36, N45, N51, N59, N109, and N115. The disordered stretch occupies residues 99-127; that stretch reads VTPTASKSTPNASASPNSTHTSASMTTPA. A compositionally biased stretch (polar residues) spans 101 to 126; that stretch reads PTASKSTPNASASPNSTHTSASMTTP. A helical membrane pass occupies residues 153 to 173; sequence AGSFVGGIVLTLGVLSILYIG. Residues 174–195 lie on the Cytoplasmic side of the membrane; it reads CKMYYSRRGIRYRSIDEHDAII. S187 is modified (phosphoserine).

This sequence belongs to the CD164 family.

It localises to the membrane. Its function is as follows. Implicated in oncotic cell death, characterized by cell swelling, organelle swelling, vacuolization and increased membrane permeability. The sequence is that of Porimin (Tmem123) from Mus musculus (Mouse).